Here is a 476-residue protein sequence, read N- to C-terminus: Light-independent protochlorophyllide reductase subunit N (476 aa).

[4Fe-4S] cluster-binding residues include Cys-31, Cys-56, and Cys-116.

This sequence belongs to the BchN/ChlN family. As to quaternary structure, protochlorophyllide reductase is composed of three subunits; ChlL, ChlN and ChlB. Forms a heterotetramer of two ChlB and two ChlN subunits. Requires [4Fe-4S] cluster as cofactor.

It is found in the plastid. It localises to the chloroplast. It catalyses the reaction chlorophyllide a + oxidized 2[4Fe-4S]-[ferredoxin] + 2 ADP + 2 phosphate = protochlorophyllide a + reduced 2[4Fe-4S]-[ferredoxin] + 2 ATP + 2 H2O. The protein operates within porphyrin-containing compound metabolism; chlorophyll biosynthesis (light-independent). Its function is as follows. Component of the dark-operative protochlorophyllide reductase (DPOR) that uses Mg-ATP and reduced ferredoxin to reduce ring D of protochlorophyllide (Pchlide) to form chlorophyllide a (Chlide). This reaction is light-independent. The NB-protein (ChlN-ChlB) is the catalytic component of the complex. This chain is Light-independent protochlorophyllide reductase subunit N, found in Staurastrum punctulatum (Green alga).